A 255-amino-acid polypeptide reads, in one-letter code: Tablysin 15 (255 aa).

A signal peptide spans 1–23; that stretch reads MTSIPVSSFLLAALVLQYATSDA. Intrachain disulfides connect Cys27–Cys40, Cys31–Cys117, and Cys49–Cys110. Residues 32-34 carry the Cell attachment site motif; sequence RGD. Residues 67–211 enclose the SCP domain; sequence LSKINDVRDH…KARALLTCNF (145 aa). Positions 82, 153, and 156 each coordinate leukotriene E4. Disulfide bonds link Cys192/Cys209 and Cys232/Cys243.

This sequence belongs to the CRISP family. In terms of tissue distribution, expressed in salivary glands.

The protein resides in the secreted. Anti-inflammatory scavenger of eicosanoids and antithrombotic protein that inhibits platelets aggregation induced by collagen, ADP and convulxin (GPVI agonist). Exhibits high affinity binding for glycoprotein IIb-IIIa receptor (ITGA2B/ITGB3) and endothelial cell alphaVbeta3 (ITGAV/ITGB3) integrins, but not for alpha-5/beta-1 or alpha-2/beta-1. Accordingly, it blocks endothelial cell adhesion to vitronectin (IC(50)~1 nM) and marginally to fibronectin (IC(50)~1 uM), but not to collagen. It also inhibits fibroblast growth factor (FGF)-induced endothelial cell proliferation, and attenuates tube formation in vitro. In addition, it dose-dependently attenuates thrombus formation to collagen under flow. Also binds proinflammatory cysteinyl leukotrienes (leukotrienes C4 (LTC4), D4 (LTD4) and E4 (LTE4)) with submicromolar affinities. The protein is Tablysin 15 of Tabanus yao (Horsefly).